The sequence spans 136 residues: Mite allergen Der f 21.0101 (136 aa).

Residues 1-17 (MKFIIFCAIVMAVSVSG) form the signal peptide.

The protein belongs to the mite group 5 allergen family. In terms of assembly, monomer. Homodimer. In terms of tissue distribution, highly expressed in foregut (stomach), midgut and hindgut. Not expressed in body wall, reproductive system or body cavity.

The protein is Mite allergen Der f 21.0101 of Dermatophagoides farinae (American house dust mite).